Consider the following 255-residue polypeptide: MMHDDPNEAGLPPDDAALPDEAADGADEVNPLHHRRIRSFVTRAGRVSTGQRRALDEFGPRFVVPYAAEIPDWDAVFGRSAPRILEIGFGMGASTAEIAAHRPGDDFLGVEVHEPGVGALLKLIGEQDLPNIRIIQHDAVEVLEHMLAPESLDGVHIFFPDPWHKARHHKRRLIQPPLVAHLASRLKPGAYLHCATDWQNYAEQMLEVLGAEPSLENTAADYAPRPDYRPITKFERRGLRLGHGVWDLVFRKRAG.

Residues 1–29 form a disordered region; it reads MMHDDPNEAGLPPDDAALPDEAADGADEV. Residues 17–27 show a composition bias toward acidic residues; that stretch reads ALPDEAADGAD. The S-adenosyl-L-methionine site is built by glutamate 86, glutamate 111, aspartate 138, and aspartate 161. The active site involves aspartate 161. Residues lysine 165, aspartate 197, and 232 to 235 contribute to the substrate site; that span reads TKFE.

It belongs to the class I-like SAM-binding methyltransferase superfamily. TrmB family.

It carries out the reaction guanosine(46) in tRNA + S-adenosyl-L-methionine = N(7)-methylguanosine(46) in tRNA + S-adenosyl-L-homocysteine. It functions in the pathway tRNA modification; N(7)-methylguanine-tRNA biosynthesis. Catalyzes the formation of N(7)-methylguanine at position 46 (m7G46) in tRNA. The protein is tRNA (guanine-N(7)-)-methyltransferase of Burkholderia ambifaria (strain ATCC BAA-244 / DSM 16087 / CCUG 44356 / LMG 19182 / AMMD) (Burkholderia cepacia (strain AMMD)).